A 304-amino-acid chain; its full sequence is Kazal-type serine protease inhibitor domain-containing protein 1 (304 aa).

A signal peptide spans 1-30; sequence MLPPPRPAAALALPVLLLLLVVLTPPPTGA. Residues 49-129 enclose the IGFBP N-terminal domain; sequence EGEGCAPCRP…EVPEPLCACR (81 aa). 7 disulfides stabilise this stretch: C53–C76, C56–C78, C61–C79, C67–C82, C90–C108, C102–C126, and C135–C168. The region spanning 120-170 is the Kazal-like domain; that stretch reads EVPEPLCACRSQSPLCGSDGHTYSQICRLQEAARARPDANLTVAHPGPCES. 2 N-linked (GlcNAc...) asparagine glycosylation sites follow: N159 and N183. Residues 172 to 269 enclose the Ig-like C2-type domain; that stretch reads PQIVSHPYDT…GQVEAPASLT (98 aa). An intrachain disulfide couples C193 to C253. A glycan (N-linked (GlcNAc...) asparagine) is linked at N277.

It localises to the secreted. The protein localises to the extracellular space. Its subcellular location is the extracellular matrix. In terms of biological role, involved in the proliferation of osteoblasts during bone formation and bone regeneration. Promotes matrix assembly. The protein is Kazal-type serine protease inhibitor domain-containing protein 1 (KAZALD1) of Homo sapiens (Human).